A 492-amino-acid polypeptide reads, in one-letter code: Cytochrome P450 2A12 (492 aa).

Cys437 lines the heme pocket.

It belongs to the cytochrome P450 family. Heme is required as a cofactor. In terms of tissue distribution, liver.

The protein resides in the endoplasmic reticulum membrane. It is found in the microsome membrane. It catalyses the reaction an organic molecule + reduced [NADPH--hemoprotein reductase] + O2 = an alcohol + oxidized [NADPH--hemoprotein reductase] + H2O + H(+). In terms of biological role, highly active in the 7-alpha-hydroxylation of testosterone. This Mus musculus (Mouse) protein is Cytochrome P450 2A12 (Cyp2a12).